Reading from the N-terminus, the 610-residue chain is MCGIVGAVAQRDVADILVDGLHRLEYRGYDSAGVAVLNEQHHMQIIRRVGKVKALEEAVIGEKVFGGTGIAHTRWATHGEPSEINAHPHRSGKIAVVHNGIIENYEALKVVLQQRGYIFASHTDTEVIAHLVEWELRTAHSLLEAVQKAVVQLRGAYGTVVMNQDDPTRLVVARSGSPLVIGYGIGENFIASDPLALLSVTHRFAYLEEGDVAEITRHAVAIYNQAGEAVTREIHQGNFEQDAADKGVYRHYMQKEIFEQPIAIMNTLAGRIKDGQVNIEAIAPNAADILAKVEHIQIVACGTSYNAGMVARYWFEEIANISCNVEIASEFRYRKFVVQPNSLLITLSQSGETADTLAALRLAKQSGYMAAMTICNVASSSLVRESDFAFMTKAGIEIGVASTKAFTTQLTCLLLLNVAIGRLKGRLSVAQEQQIVQSLQKLPSQIESALVFDKAIEKLSEDFADKQHTLFLGRGEFYPIAMESALKLKEISYIHAEAYAAGELKHGPLALIDSEMPVVVVAPENDLLEKVKSNIEEVRARGGQLYVFADHEAGFEQTVDFKTIVLPRVDAVTAPIFYTVPLQLLSYHIALIKGTDVDQPRNLAKAVTVE.

The Nucleophile; for GATase activity role is filled by Cys2. Residues Cys2–His218 form the Glutamine amidotransferase type-2 domain. SIS domains follow at residues Ala286–Arg426 and Leu459–Pro600. The active-site For Fru-6P isomerization activity is Lys605.

In terms of assembly, homodimer.

The protein localises to the cytoplasm. It carries out the reaction D-fructose 6-phosphate + L-glutamine = D-glucosamine 6-phosphate + L-glutamate. Catalyzes the first step in hexosamine metabolism, converting fructose-6P into glucosamine-6P using glutamine as a nitrogen source. In Haemophilus ducreyi (strain 35000HP / ATCC 700724), this protein is Glutamine--fructose-6-phosphate aminotransferase [isomerizing].